Reading from the N-terminus, the 787-residue chain is MLSDTIDTKQQQQQLHVLFIDSYDSFTYNVVRLIEQQTDISPGVNAVHVTTVHSDTFQSMDQLLPLLPLFDAIVVGPGPGNPNNGAQDMGIISELFENANGKLDEVPILGICLGFQAMCLAQGADVSELNTIKHGQVYEMHLNDAARACGLFSGYPDTFKSTRYHSLHVNAEGIDTLLPLCTTEDENGILLMSAQTKNKPWFGVQYHPESCCSELGGLLVSNFLKLSFINNVKTGRWEKKKLNGEFSDILSRLDRTIDRDPIYKVKEKYPKGEDTTYVKQFEVSEDPKLTFEICNIIREEKFVMSSSVISENTGEWSIIALPNSASQVFTHYGAMKKTTVHYWQDSEISYTLLKKCLDGQDSDLPGSLEVIHEDKSQFWITLGKFMENKIIDNHREIPFIGGLVGILGYEIGQYIACGRCNDDENSLVPDAKLVFINNSIVINHKQGKLYCISLDNTFPVALEQSLRDSFVRKKNIKQSLSWPKYLPEEIDFIITMPDKLDYAKAFKKCQDYMHKGDSYEMCLTTQTKVVPSAVIEPWRIFQTLVQRNPAPFSSFFEFKDIIPRQDETPPVLCFLSTSPERFLKWDADTCELRPIKGTVKKGPQMNLAKATRILKTPKEFGENLMILDLIRNDLYELVPDVRVEEFMSVQEYATVYQLVSVVKAHGLTSASKKTRYSGIDVLKHSLPPGSMTGAPKKITVQLLQDKIESKLNKHVNGGARGVYSGVTGYWSVNSNGDWSVNIRCMYSYNGGTSWQLGAGGAITVLSTLDGELEEMYNKLESNLQIFM.

The Glutamine amidotransferase type-1 domain occupies H16 to K233. Active-site residues include C112, H207, and E209. Residues M304–M787 form a PABB component region.

In the C-terminal section; belongs to the anthranilate synthase component I family.

It is found in the cytoplasm. It catalyses the reaction chorismate + L-glutamine = 4-amino-4-deoxychorismate + L-glutamate. Its pathway is cofactor biosynthesis; tetrahydrofolate biosynthesis; 4-aminobenzoate from chorismate: step 1/2. Its function is as follows. Catalyzes the biosynthesis of 4-amino-4-deoxychorismate (ADC) from chorismate and glutamine. Required for the synthesis of 4-aminobenzoate (PABA), an important component in tetrahydrofolate biosynthesis. The polypeptide is Aminodeoxychorismate synthase (ABZ1) (Saccharomyces cerevisiae (strain ATCC 204508 / S288c) (Baker's yeast)).